A 569-amino-acid chain; its full sequence is Probable pyruvate decarboxylase Pdc101 (569 aa).

Residues D33 and H120 each coordinate substrate. S233 carries the phosphoserine modification. The tract at residues 396-478 (DSWFNGLQMK…FLLNNRGYTI (83 aa)) is thiamine pyrophosphate binding. Residues D446, N473, and G475 each contribute to the Mg(2+) site. E479 serves as a coordination point for substrate. T521 is modified (phosphothreonine). A Phosphoserine modification is found at S522.

Belongs to the TPP enzyme family. As to quaternary structure, homotetramer. A metal cation is required as a cofactor. It depends on thiamine diphosphate as a cofactor.

It carries out the reaction a 2-oxocarboxylate + H(+) = an aldehyde + CO2. The polypeptide is Probable pyruvate decarboxylase Pdc101 (pdc101) (Schizosaccharomyces pombe (strain 972 / ATCC 24843) (Fission yeast)).